Consider the following 60-residue polypeptide: Large ribosomal subunit protein eL37 (60 aa).

Zn(2+) contacts are provided by Cys19, Cys22, Cys34, and Cys37. The C4-type zinc finger occupies 19-37 (CRRCGRISFHAQKKVCSSC).

It belongs to the eukaryotic ribosomal protein eL37 family. It depends on Zn(2+) as a cofactor.

Functionally, binds to the 23S rRNA. The chain is Large ribosomal subunit protein eL37 from Methanoregula boonei (strain DSM 21154 / JCM 14090 / 6A8).